The following is a 217-amino-acid chain: Probable cytidylate kinase (217 aa).

9-17 (GPAGSGKST) is a binding site for ATP.

It belongs to the cytidylate kinase family. Type 1 subfamily.

It catalyses the reaction CMP + ATP = CDP + ADP. The enzyme catalyses dCMP + ATP = dCDP + ADP. The protein is Probable cytidylate kinase of Vairimorpha ceranae (strain BRL01) (Microsporidian parasite).